The chain runs to 59 residues: UPF0434 protein plu1633 (59 aa).

Belongs to the UPF0434 family.

This chain is UPF0434 protein plu1633, found in Photorhabdus laumondii subsp. laumondii (strain DSM 15139 / CIP 105565 / TT01) (Photorhabdus luminescens subsp. laumondii).